Reading from the N-terminus, the 221-residue chain is Germin-like protein subfamily 1 member 17 (221 aa).

An N-terminal signal peptide occupies residues 1 to 21 (MKVSMSLILITLSALVTIAKA). A disulfide bridge connects residues cysteine 31 and cysteine 48. The Cupin type-1 domain maps to 76-213 (SNVTTVNVDQ…AFQLDVNVVK (138 aa)). The N-linked (GlcNAc...) asparagine glycan is linked to asparagine 77. Histidine 110, histidine 112, glutamate 117, and histidine 159 together coordinate Mn(2+).

It belongs to the germin family. Oligomer (believed to be a pentamer but probably hexamer).

Its subcellular location is the secreted. It is found in the extracellular space. The protein localises to the apoplast. Its function is as follows. May play a role in plant defense. Probably has no oxalate oxidase activity even if the active site is conserved. The sequence is that of Germin-like protein subfamily 1 member 17 from Arabidopsis thaliana (Mouse-ear cress).